A 163-amino-acid polypeptide reads, in one-letter code: Protein-export protein SecB (163 aa).

Belongs to the SecB family. In terms of assembly, homotetramer, a dimer of dimers. One homotetramer interacts with 1 SecA dimer.

It is found in the cytoplasm. One of the proteins required for the normal export of preproteins out of the cell cytoplasm. It is a molecular chaperone that binds to a subset of precursor proteins, maintaining them in a translocation-competent state. It also specifically binds to its receptor SecA. The sequence is that of Protein-export protein SecB from Methylibium petroleiphilum (strain ATCC BAA-1232 / LMG 22953 / PM1).